We begin with the raw amino-acid sequence, 350 residues long: Dihydroorotase (350 aa).

Positions 17 and 19 each coordinate Zn(2+). Substrate contacts are provided by residues 19–21 (HLR) and N45. Zn(2+)-binding residues include K103, H140, and H178. K103 is subject to N6-carboxylysine. H140 serves as a coordination point for substrate. A substrate-binding site is contributed by L224. Residue D252 participates in Zn(2+) binding. D252 is a catalytic residue. Substrate is bound by residues H256 and A268.

It belongs to the metallo-dependent hydrolases superfamily. DHOase family. Class II DHOase subfamily. Homodimer. The cofactor is Zn(2+).

The enzyme catalyses (S)-dihydroorotate + H2O = N-carbamoyl-L-aspartate + H(+). Its pathway is pyrimidine metabolism; UMP biosynthesis via de novo pathway; (S)-dihydroorotate from bicarbonate: step 3/3. Functionally, catalyzes the reversible cyclization of carbamoyl aspartate to dihydroorotate. The protein is Dihydroorotase of Buchnera aphidicola subsp. Acyrthosiphon pisum (strain APS) (Acyrthosiphon pisum symbiotic bacterium).